The sequence spans 327 residues: MSVAPPVLVIAGLTGAGKTLAIQQLEQLGYTSLEGIPPAQVIPLVEAMRTHHAALAISLNLHAQEYRDQVPTLAAWVQSQGIPFLFLEARSPVLLNRLSAHRRPHPYGEAAGLWEAIEQERLALAPVRERCTHWLDTSDLNAQQLRQQLQALVQGIPQPLNLRLVSFGFKYGVPPDANLLFDVRFLPNPFFQPHLRRLTGQDPLLQEFLFADPITQSTYQHILSLIKAFWPHYRAERRPHLTLAIGCTGGQHRSVALVERLAQDLQPWTVPAGNHVLPDLNVQVQHRHLLDSQRELEARFGPVPGEAGVAQQQVRIPLAGVPAPSHA.

12 to 19 (GLTGAGKT) contributes to the ATP binding site.

This sequence belongs to the RapZ-like family.

Its function is as follows. Displays ATPase and GTPase activities. In Synechococcus sp. (strain JA-2-3B'a(2-13)) (Cyanobacteria bacterium Yellowstone B-Prime), this protein is Nucleotide-binding protein CYB_0992.